A 392-amino-acid polypeptide reads, in one-letter code: Hercynylcysteine sulfoxide lyase (392 aa).

Lysine 219 is modified (N6-(pyridoxal phosphate)lysine).

It belongs to the class-V pyridoxal-phosphate-dependent aminotransferase family. EgtE subfamily. It depends on pyridoxal 5'-phosphate as a cofactor.

The protein resides in the cytoplasm. Its subcellular location is the nucleus. It carries out the reaction S-(hercyn-2-yl)-L-cysteine S-oxide + AH2 + H(+) = ergothioneine + pyruvate + A + NH4(+). Its pathway is amino-acid biosynthesis; ergothioneine biosynthesis. Catalyzes the conversion of hercynylcysteine sulfoxide to ergothioneine by cleaving the cysteine residue at the sulfur atom, the last step in the biosynthesis pathway of ergothioneine. This is Hercynylcysteine sulfoxide lyase from Schizosaccharomyces pombe (strain 972 / ATCC 24843) (Fission yeast).